A 142-amino-acid polypeptide reads, in one-letter code: UPF0332 protein PH1297 (142 aa).

The protein belongs to the UPF0332 family.

The chain is UPF0332 protein PH1297 from Pyrococcus horikoshii (strain ATCC 700860 / DSM 12428 / JCM 9974 / NBRC 100139 / OT-3).